Reading from the N-terminus, the 277-residue chain is Putative phosphoenolpyruvate synthase regulatory protein (277 aa).

157–164 (GVSRSGKT) provides a ligand contact to ADP.

This sequence belongs to the pyruvate, phosphate/water dikinase regulatory protein family. PSRP subfamily.

The catalysed reaction is [pyruvate, water dikinase] + ADP = [pyruvate, water dikinase]-phosphate + AMP + H(+). It catalyses the reaction [pyruvate, water dikinase]-phosphate + phosphate + H(+) = [pyruvate, water dikinase] + diphosphate. In terms of biological role, bifunctional serine/threonine kinase and phosphorylase involved in the regulation of the phosphoenolpyruvate synthase (PEPS) by catalyzing its phosphorylation/dephosphorylation. The polypeptide is Putative phosphoenolpyruvate synthase regulatory protein (Aromatoleum aromaticum (strain DSM 19018 / LMG 30748 / EbN1) (Azoarcus sp. (strain EbN1))).